Here is a 252-residue protein sequence, read N- to C-terminus: Flap endonuclease Xni (252 aa).

Aspartate 105 is a binding site for Mg(2+). The region spanning 162–251 (EQYQFLDFIA…EINLKQFRVK (90 aa)) is the 5'-3' exonuclease domain. The K(+) site is built by leucine 172, alanine 173, proline 181, isoleucine 183, and isoleucine 186. Residues 185 to 190 (GIGPKS) are interaction with DNA.

It belongs to the Xni family. The cofactor is Mg(2+). K(+) is required as a cofactor.

Has flap endonuclease activity. During DNA replication, flap endonucleases cleave the 5'-overhanging flap structure that is generated by displacement synthesis when DNA polymerase encounters the 5'-end of a downstream Okazaki fragment. In Shewanella denitrificans (strain OS217 / ATCC BAA-1090 / DSM 15013), this protein is Flap endonuclease Xni.